The chain runs to 245 residues: Dehydrogenase/reductase SDR family member 6 (245 aa).

NAD(+) contacts are provided by residues 16–18, Asp37, and Asp58; that span reads QGI. Residue Arg144 coordinates substrate. Tyr147 acts as the Proton acceptor in catalysis. NAD(+) is bound by residues Lys151 and 180–184; that span reads VDTPS. Residues Arg188 and Arg205 each coordinate substrate.

Belongs to the short-chain dehydrogenases/reductases (SDR) family. As to quaternary structure, homotetramer.

It localises to the cytoplasm. The catalysed reaction is cis-4-hydroxy-L-proline + NAD(+) = 4-oxo-L-proline + NADH + H(+). The enzyme catalyses (R)-3-hydroxybutanoate + NAD(+) = acetoacetate + NADH + H(+). Its pathway is amino-acid metabolism. It participates in siderophore biosynthesis. Its function is as follows. NAD(H)-dependent dehydrogenase/reductase with a preference for cyclic substrates. Catalyzes stereoselective conversion of 4-oxo-L-proline to cis-4-hydroxy-L-proline, likely a detoxification mechanism for ketoprolines. Mediates the formation of 2,5-dihydroxybenzoate (2,5-DHBA), a siderophore that chelates free cytoplasmic iron and associates with LCN2, thereby regulating iron transport and homeostasis while protecting cells against free radical-induced oxidative stress. The iron-siderophore complex is imported into mitochondria, providing an iron source for mitochondrial metabolic processes in particular heme synthesis. May act as a 3-hydroxybutyrate dehydrogenase. The polypeptide is Dehydrogenase/reductase SDR family member 6 (Rattus norvegicus (Rat)).